The following is a 195-amino-acid chain: Molybdenum cofactor guanylyltransferase (195 aa).

GTP contacts are provided by residues 10–12 (LAG), Lys23, Asn51, Asp69, and Asp99. Residue Asp99 coordinates Mg(2+).

Belongs to the MobA family. In terms of assembly, monomer. Mg(2+) serves as cofactor.

The protein resides in the cytoplasm. It catalyses the reaction Mo-molybdopterin + GTP + H(+) = Mo-molybdopterin guanine dinucleotide + diphosphate. In terms of biological role, transfers a GMP moiety from GTP to Mo-molybdopterin (Mo-MPT) cofactor (Moco or molybdenum cofactor) to form Mo-molybdopterin guanine dinucleotide (Mo-MGD) cofactor. This chain is Molybdenum cofactor guanylyltransferase, found in Yersinia pestis bv. Antiqua (strain Antiqua).